We begin with the raw amino-acid sequence, 183 residues long: Nodulation protein L (183 aa).

Belongs to the transferase hexapeptide repeat family.

Functionally, acetyltransferase implicated in the O-acetylation of Nod factors. The protein is Nodulation protein L (nodL) of Rhizobium meliloti (strain 1021) (Ensifer meliloti).